We begin with the raw amino-acid sequence, 620 residues long: E3 ubiquitin-protein ligase AMFR (620 aa).

7 helical membrane passes run 75–95 (LFVW…GKVI), 115–135 (FWNF…VQRV), 138–158 (VVLW…VQLC), 179–199 (VLAL…LCAL), 201–221 (GHIH…LVTV), 247–267 (SSYI…LDLM), and 269–289 (HIHM…VIFM). The RING-type; atypical zinc finger occupies 334–372 (CAICWDSMTTARKLPCGHLFHNSCLRSWLEQDTSCPTCR). One can recognise a CUE domain in the interval 449–491 (QLNGMAHQIQEMFPQVPYHLILQDLQLTRSVEVTTDNILEGRI). The span at 510 to 526 (ASEDGAGASSGSEVAAP) shows a compositional bias: low complexity. 2 disordered regions span residues 510–544 (ASED…SADE) and 569–598 (PEDG…DSVT). Positions 531–544 (FEVRGSRFSKSADE) are enriched in basic and acidic residues. Over residues 581–595 (DNDDSVPSIEDEDSD) the composition is skewed to acidic residues.

In terms of tissue distribution, widely expressed.

Its subcellular location is the endoplasmic reticulum membrane. The catalysed reaction is [E2 ubiquitin-conjugating enzyme]-S-ubiquitinyl-L-cysteine + [acceptor protein]-L-cysteine = [E2 ubiquitin-conjugating enzyme]-L-cysteine + [acceptor protein]-S-ubiquitinyl-L-cysteine.. It participates in protein modification; protein ubiquitination. In terms of biological role, E3 ubiquitin-protein ligase that mediates the polyubiquitination of lysine and cysteine residues on target proteins. May participate in the final step of endoplasmic reticulum-associated degradation (ERAD). Required for proper lipid homeostasis. In Danio rerio (Zebrafish), this protein is E3 ubiquitin-protein ligase AMFR.